We begin with the raw amino-acid sequence, 85 residues long: UPF0512 protein U (85 aa).

The protein belongs to the UPF0512 family.

The chain is UPF0512 protein U from Dictyostelium discoideum (Social amoeba).